Here is a 356-residue protein sequence, read N- to C-terminus: Phosphoribosyl pyrophosphate synthase-associated protein 1 (356 aa).

An N-acetylmethionine modification is found at M1. Phosphoserine occurs at positions 177 and 215.

This sequence belongs to the ribose-phosphate pyrophosphokinase family. Binds to PRPS1 and PRPS2.

Seems to play a negative regulatory role in 5-phosphoribose 1-diphosphate synthesis. The polypeptide is Phosphoribosyl pyrophosphate synthase-associated protein 1 (Prpsap1) (Mus musculus (Mouse)).